A 211-amino-acid chain; its full sequence is uncharacterized protein (211 aa).

The Zn(2+) site is built by histidine 54, histidine 56, aspartate 58, histidine 59, histidine 129, aspartate 148, and histidine 189.

It belongs to the metallo-beta-lactamase superfamily. Glyoxalase II family. It depends on Zn(2+) as a cofactor.

This is an uncharacterized protein from Aquifex aeolicus (strain VF5).